The following is an 865-amino-acid chain: Leucine--tRNA ligase (865 aa).

Positions 44–54 (PYPSGRIHVGH) match the 'HIGH' region motif. The short motif at 625-629 (KMSKS) is the 'KMSKS' region element. K628 is a binding site for ATP.

Belongs to the class-I aminoacyl-tRNA synthetase family.

It is found in the cytoplasm. The catalysed reaction is tRNA(Leu) + L-leucine + ATP = L-leucyl-tRNA(Leu) + AMP + diphosphate. In Maricaulis maris (strain MCS10) (Caulobacter maris), this protein is Leucine--tRNA ligase.